A 901-amino-acid chain; its full sequence is Nuclear factor of activated T-cells, cytoplasmic 4 (901 aa).

Disordered stretches follow at residues 15–179 (LVFG…LSSW) and 203–362 (NEAA…EDSV). The segment covering 61–81 (IPRPPPPRPGMHSPPPRPAPS) has biased composition (pro residues). Positions 96–109 (GGPGGNAGGAGGGR) are enriched in gly residues. Residues 114–119 (PSIRIT) form a calcineurin-binding region. Residues 114–123 (PSIRITSISP) show a composition bias toward low complexity. Residues 151-165 (GFGGYREAGGQGGGA) are compositionally biased toward gly residues. Over residues 166–179 (FFSPSPGSSSLSSW) the composition is skewed to low complexity. Phosphoserine; by MAPK7 and MAPK14 occurs at positions 168 and 170. A phosphoserine; by MAPK8 and MAPK9 mark is found at Ser-213 and Ser-217. One copy of the SP 1 repeat lies at 213-229 (SPLPSPRASPRPWTPED). Positions 213–293 (SPLPSPRASP…LSRRGSLGEE (81 aa)) are 2 approximate SP repeats. Pro residues-rich tracts occupy residues 215-227 (LPSPRASPRPWTP) and 254-263 (GPVPASPRPA). The Nuclear localization signal signature appears at 268 to 270 (KRR). The segment covering 272-288 (SSSGTPSSASPALSRRG) has biased composition (low complexity). Residues 277 to 293 (PSSASPALSRRGSLGEE) form an SP 2; approximate repeat. The residue at position 289 (Ser-289) is a Phosphoserine. Ser-334 carries the phosphoserine; by RPS6KA3 modification. Phosphoserine is present on Ser-344. Residues 401-582 (SALPPLDWPL…VPIECSQRSA (182 aa)) form the RHD domain. Residues 430 to 437 (RAHYETEG) mediate DNA binding. An IPT/TIG domain is found at 586-683 (PQVETYSPSA…KRSPTQSFKF (98 aa)). A Nuclear localization signal motif is present at residues 672-674 (RRK). A Glycyl lysine isopeptide (Lys-Gly) (interchain with G-Cter in SUMO2) cross-link involves residue Lys-689. Disordered regions lie at residues 695-721 (DSSLRGFPSTSGPPFGPDVDFSPPRPP) and 827-869 (PQSA…FRDS).

As to quaternary structure, member of the multicomponent NFATC transcription complex that consists of at least two components, a pre-existing cytoplasmic component NFATC2 and an inducible nuclear component NFATC1. Other NFAT proteins, such as NFATC3, or members of the activating protein-1 (AP-1) family and MAF can also bind the complex. NFAT proteins can bind DNA as monomers or dimers. Component of a promoter-binding complex composed of STAT3, NFATC3 and NFATC4; complex formation is enhanced by calcineurin. Interacts with CREBBP; this interaction potentiates transcription activation. Interacts with MAPK8/JNK1 and MAPK9/JNK2. Interacts with GATA4 (via the second Zn finger). Interacts (via N-terminus) with IRAK1 (via C-terminus). Interacts with RPS6KA3. Interacts with HOMER1, HOMER2 and HOMER3; this interaction competes with calcineurin/PPP3CA-binding and hence prevents NFATC4 dephosphorylation and activation. Interacts with ESR1 and ESR2; this interaction decreases NFATC4 transcriptional activity. Interacts with MTOR and MAPK7/ERK5. Interacts with TRIM17; this interaction prevents NFATC3 nuclear localization. Interacts with TCF25 (via C-terminus); the interaction leads to suppression of NFATC4 transcription factor activity and is reduced following stimulation with angiotensin-2. Post-translationally, phosphorylated by NFATC-kinases; dephosphorylated by calcineurin/PPP3CA. Phosphorylated on Ser-168 and Ser-170 by MTOR, IRAK1, MAPK7/ERK5 and MAPK14/p38, on Ser-213 and Ser-217 by MAPK8 and MAPK9, and on Ser-289 and Ser-344 by RPS6KA3. Phosphorylated by GSK3B. Phosphorylation by GSK3B markedly increases NFATC4 ubiquitination. Phosphorylation by MAPK8/JNK1, MAPK9/JNK2 and RPS6KA3 may stimulate NFATC4 transcriptional activity. Phosphorylation at Ser-168 and Ser-170 is stimulated by UV irradiation. Ubiquitinated, leading to degradation by the proteasome. Ubiquitination may be stimulated by GSK3B-dependent phosphorylation. Polyubiquitin linkage mainly occurs through 'Lys-48'. Widely expressed. In the brain, expressed in neurons. Expressed in the hippocampus (at protein level). In the hippocampus, expressed in both the CA1-CA3 pyramidal cells and the dentate gyrus granular cells. Expressed in a subset of hippocampal cells representing adult-born neurons (at protein level). Expressed in the submandibular gland (at protein level). In the olfactory system, expressed at low levels in the glomerular and granular layers and in the mitral cell layer. In the cerebellum, expressed at moderate levels in granular neurons. Expressed at moderate levels in the choroid plexus and ependymal cells. Expressed in neurons of the cochlear nucleus (at protein level). Expressed at low levels in the heart (at protein level). Expressed in ventricular cardiomyocytes (at protein level). Expressed in the lung.

The protein resides in the cytoplasm. Its subcellular location is the nucleus. Its function is as follows. Ca(2+)-regulated transcription factor that is involved in several processes, including the development and function of the immune, cardiovascular, musculoskeletal, and nervous systems. Involved in T-cell activation, stimulating the transcription of cytokine genes, including that of IL2 and IL4. Following JAK/STAT signaling activation and as part of a complex with NFATC3 and STAT3, binds to the alpha-beta E4 promoter region of CRYAB and activates transcription in cardiomyocytes. Along with NFATC3, involved in embryonic heart development. Involved in mitochondrial energy metabolism required for cardiac morphogenesis and function. Transactivates many genes involved in heart physiology. Along with GATA4, binds to and activates NPPB/BNP promoter. Activates NPPA/ANP/ANF and MYH7/beta-MHC transcription. Binds to and transactivates AGTR2 gene promoter. Involved in the regulation of adult hippocampal neurogenesis. Involved in BDNF-driven pro-survival signaling in hippocampal adult-born neurons. Involved in the formation of long-term spatial memory and long-term potentiation. In cochlear nucleus neurons, may play a role in deafferentation-induced apoptosis during a developmental critical period when auditory neurons depend on afferent input for survival. Binds to and activates the BACE1/Beta-secretase 1 promoter, hence may regulate the proteolytic processing of the amyloid precursor protein (APP). Plays a role in adipocyte differentiation. May be involved in myoblast differentiation into myotubes. Binds the consensus DNA sequence 5'-GGAAAAT-3'. In the presence of CREBBP, activates TNF transcription. Binds to PPARG gene promoter and regulates its activity. Binds to PPARG and REG3G gene promoters. The chain is Nuclear factor of activated T-cells, cytoplasmic 4 from Mus musculus (Mouse).